A 470-amino-acid chain; its full sequence is MASPEPLRGGDGARASREPHTEASFPLQESESPKEAKTFNPEATLSLEGTVNLEDILYLGASGDFEESFYEEEYEKPALTLFIDESRQPDEALGLEEPVRPEEMLSVEESVTPDEVQISEQPVEPAKSPTACEGEMVATEGSLPAQPIPNTEEDPLSVEDLERLEARFQQCVQAVSQLEEERDQLIHELVLLREPALQEVQQVHQDILAAYKLHAQAELERDGLREEIRTVKQKLFKVTKECVAYQYQLECRQQDVAQFADCREALTTRAAQLSEELTQLRDACQKQKEQLQQQLEAPPTQSDGHFLQESRRLSTQFENLMAESRQGLEEEYEPQLLRLLERKEAGTKALQDTQAEIQEMREALRPLEAEARQLQLQNRNLEDQITLVRQKRDEEVQQYREQLEEMEERQRQLRSGVQVQQQKNKEMERLRMSLAEELSTYKAMLPKSLEQADAPTSQAGGVEAQSPGTV.

Residues M1–A43 are disordered. The interval M1–I148 is head. Residue S32 is modified to Phosphoserine. The 296-residue stretch at S157–A452 folds into the IF rod domain. The coil 1A stretch occupies residues V158–L192. Residues R193–L219 are linker 1. The interval E220 to A297 is coil 1b. Residues P298–L337 are linker 2. At S314 the chain carries Phosphoserine. The segment at R338–L445 is coil 2. Residues P446–V470 are disordered. Positions P446–V470 are tail.

Belongs to the intermediate filament family. In terms of assembly, may link the dystrophin-associated glycoprotein complex (DAPC) to intracellular desmin (DES) filaments. Interacts with DES and DTNA. Detected strongly in skeletal muscle and heart and weakly in lung (at protein level). Highly expressed in skeletal muscle and lung and weakly in lung and testis.

The protein localises to the cytoplasm. The protein resides in the perinuclear region. Atypical type III intermediate filament (IF) protein that may play a supportive role in the efficient coupling of mechanical stress between the myofibril and fiber exterior. May facilitate lateral force transmission during skeletal muscle contraction. Does not form homofilaments nor heterofilaments with other IF proteins. The sequence is that of Syncoilin (Sync) from Mus musculus (Mouse).